We begin with the raw amino-acid sequence, 110 residues long: BET1-like protein (110 aa).

Over 1–85 the chain is Cytoplasmic; the sequence is MADPWNRGHG…MVRSGRDNRK (85 aa). The region spanning 14–76 is the t-SNARE coiled-coil homology domain; that stretch reads DMLDAENKRM…TGSVKRFSTM (63 aa). Residues 86-106 form a helical; Anchor for type IV membrane protein membrane-spanning segment; that stretch reads ILCYVSVGLVVAFFLLYYLVS. The Lumenal portion of the chain corresponds to 107–110; the sequence is RMQN.

In terms of assembly, component of a SNARE complex consisting of stx5, ykt6, gosr2 and bet1l.

The protein localises to the golgi apparatus membrane. Functionally, vesicle SNARE required for targeting and fusion of retrograde transport vesicles with the Golgi complex. Required for the integrity of the Golgi complex. This is BET1-like protein (bet1l) from Danio rerio (Zebrafish).